A 127-amino-acid polypeptide reads, in one-letter code: UPF0325 protein VC_2264 (127 aa).

Belongs to the UPF0325 family.

In Vibrio cholerae serotype O1 (strain ATCC 39315 / El Tor Inaba N16961), this protein is UPF0325 protein VC_2264.